A 279-amino-acid polypeptide reads, in one-letter code: Probable endonuclease 4 (279 aa).

Residues His-69, His-109, Glu-145, Asp-179, His-182, His-216, Asp-229, His-231, and Glu-261 each contribute to the Zn(2+) site.

The protein belongs to the AP endonuclease 2 family. Requires Zn(2+) as cofactor.

It catalyses the reaction Endonucleolytic cleavage to 5'-phosphooligonucleotide end-products.. Its function is as follows. Endonuclease IV plays a role in DNA repair. It cleaves phosphodiester bonds at apurinic or apyrimidinic (AP) sites, generating a 3'-hydroxyl group and a 5'-terminal sugar phosphate. This Serratia proteamaculans (strain 568) protein is Probable endonuclease 4.